Reading from the N-terminus, the 353-residue chain is Forkhead box protein I3-A (353 aa).

Positions 116–210 (RPPYSYSALI…DNGNFRRKRK (95 aa)) form a DNA-binding region, fork-head. Residues 201–255 (DNGNFRRKRKRKSDSLAEEEGKGYSGSDSALSSPKNPSDSSERGNSPISTDQAPC) are disordered. The Nuclear localization signal signature appears at 206–212 (RRKRKRK). Positions 213–222 (SDSLAEEEGK) are enriched in basic and acidic residues. Positions 226–252 (GSDSALSSPKNPSDSSERGNSPISTDQ) are enriched in polar residues.

Expressed in ionocyte precursors.

It is found in the nucleus. Its function is as follows. Transcription factor required for epithelial cell differentiation. Involved in specification of skin ionocytes from epidermal precursors. The chain is Forkhead box protein I3-A from Danio rerio (Zebrafish).